The chain runs to 418 residues: Serine hydroxymethyltransferase (418 aa).

(6S)-5,6,7,8-tetrahydrofolate contacts are provided by residues L121 and 125 to 127 (GHL). An N6-(pyridoxal phosphate)lysine modification is found at K230. A (6S)-5,6,7,8-tetrahydrofolate-binding site is contributed by 356 to 358 (SPF).

Belongs to the SHMT family. As to quaternary structure, homodimer. Requires pyridoxal 5'-phosphate as cofactor.

The protein resides in the cytoplasm. The catalysed reaction is (6R)-5,10-methylene-5,6,7,8-tetrahydrofolate + glycine + H2O = (6S)-5,6,7,8-tetrahydrofolate + L-serine. It participates in one-carbon metabolism; tetrahydrofolate interconversion. It functions in the pathway amino-acid biosynthesis; glycine biosynthesis; glycine from L-serine: step 1/1. Catalyzes the reversible interconversion of serine and glycine with tetrahydrofolate (THF) serving as the one-carbon carrier. This reaction serves as the major source of one-carbon groups required for the biosynthesis of purines, thymidylate, methionine, and other important biomolecules. Also exhibits THF-independent aldolase activity toward beta-hydroxyamino acids, producing glycine and aldehydes, via a retro-aldol mechanism. The chain is Serine hydroxymethyltransferase from Shewanella woodyi (strain ATCC 51908 / MS32).